A 1224-amino-acid polypeptide reads, in one-letter code: Coatomer subunit alpha (1224 aa).

4 WD repeats span residues 7–37, 49–79, 91–121, and 133–163; these read TKSA…QLWD, EHDG…KVWN, GHLD…RVWN, and GHNH…RVWD. A Phosphoserine modification is found at Ser-173. Thr-185 carries the phosphothreonine modification. WD repeat units lie at residues 203–233 and 247–277; these read GHDR…KIWR and GHYN…RVWD. A Phosphothreonine modification is found at Thr-591. Arg-965 is subject to Omega-N-methylarginine. Position 1193 is a phosphoserine (Ser-1193).

In terms of assembly, oligomeric complex that consists of at least the alpha, beta, beta', gamma, delta, epsilon and zeta subunits. Interacts with SCYL1. Interacts with JAGN1. Interacts with TMEM41B. Interacts with SVEP1. Probably interacts with PEX11A.

Its subcellular location is the cytoplasm. It is found in the golgi apparatus membrane. It localises to the cytoplasmic vesicle. The protein localises to the COPI-coated vesicle membrane. The protein resides in the secreted. Its function is as follows. The coatomer is a cytosolic protein complex that binds to dilysine motifs and reversibly associates with Golgi non-clathrin-coated vesicles, which further mediate biosynthetic protein transport from the ER, via the Golgi up to the trans Golgi network. Coatomer complex is required for budding from Golgi membranes, and is essential for the retrograde Golgi-to-ER transport of dilysine-tagged proteins. In mammals, the coatomer can only be recruited by membranes associated to ADP-ribosylation factors (ARFs), which are small GTP-binding proteins; the complex also influences the Golgi structural integrity, as well as the processing, activity, and endocytic recycling of LDL receptors. Xenin stimulates exocrine pancreatic secretion. It inhibits pentagastrin-stimulated secretion of acid, to induce exocrine pancreatic secretion and to affect small and large intestinal motility. In the gut, xenin interacts with the neurotensin receptor. This Bos taurus (Bovine) protein is Coatomer subunit alpha (COPA).